We begin with the raw amino-acid sequence, 372 residues long: Cytochrome b (372 aa).

4 helical membrane-spanning segments follow: residues 25–45, 69–90, 105–125, and 170–190; these read FGSM…FLSM, WMMQ…YIHV, WLSG…GYVL, and FFAL…LHIM. His-75 and His-89 together coordinate heme b. Residues His-174 and His-188 each contribute to the heme b site. His-193 is a binding site for a ubiquinone. 4 helical membrane passes run 218-238, 280-300, 312-332, and 339-358; these read YKDL…ISFI, LGGA…PFTH, FMQL…WTAT, and YTMI…MSNP.

Belongs to the cytochrome b family. The cytochrome bc1 complex contains 3 respiratory subunits (MT-CYB, CYC1 and UQCRFS1), 2 core proteins (UQCRC1 and UQCRC2) and probably 6 low-molecular weight proteins. Heme b serves as cofactor.

The protein resides in the mitochondrion inner membrane. Its function is as follows. Component of the ubiquinol-cytochrome c reductase complex (complex III or cytochrome b-c1 complex) that is part of the mitochondrial respiratory chain. The b-c1 complex mediates electron transfer from ubiquinol to cytochrome c. Contributes to the generation of a proton gradient across the mitochondrial membrane that is then used for ATP synthesis. In Acrantophis madagascariensis (Madagascar ground boa), this protein is Cytochrome b (MT-CYB).